The primary structure comprises 31 residues: MEAFSYVLILTLALVTLFFAVAFRDPPKYDK.

Residues 3 to 23 (AFSYVLILTLALVTLFFAVAF) form a helical membrane-spanning segment.

Belongs to the PsbT family. As to quaternary structure, PSII is composed of 1 copy each of membrane proteins PsbA, PsbB, PsbC, PsbD, PsbE, PsbF, PsbH, PsbI, PsbJ, PsbK, PsbL, PsbM, PsbT, PsbX, PsbY, Psb30/Ycf12, peripheral proteins PsbO, CyanoQ (PsbQ), PsbU, PsbV and a large number of cofactors. It forms dimeric complexes.

It is found in the cellular thylakoid membrane. Functionally, found at the monomer-monomer interface of the photosystem II (PS II) dimer, plays a role in assembly and dimerization of PSII. PSII is a light-driven water plastoquinone oxidoreductase, using light energy to abstract electrons from H(2)O, generating a proton gradient subsequently used for ATP formation. The sequence is that of Photosystem II reaction center protein T from Prochlorococcus marinus (strain NATL2A).